We begin with the raw amino-acid sequence, 300 residues long: Quinolinate synthase (300 aa).

Iminosuccinate contacts are provided by histidine 21 and serine 38. [4Fe-4S] cluster is bound at residue cysteine 83. Residues 109–111 (YVN) and serine 126 each bind iminosuccinate. Cysteine 170 is a [4Fe-4S] cluster binding site. Residues 196-198 (HPE) and threonine 213 each bind iminosuccinate. Cysteine 256 lines the [4Fe-4S] cluster pocket.

This sequence belongs to the quinolinate synthase family. Type 2 subfamily. Monomer. Homodimer. [4Fe-4S] cluster is required as a cofactor.

The protein resides in the cytoplasm. It carries out the reaction iminosuccinate + dihydroxyacetone phosphate = quinolinate + phosphate + 2 H2O + H(+). The protein operates within cofactor biosynthesis; NAD(+) biosynthesis; quinolinate from iminoaspartate: step 1/1. Catalyzes the condensation of iminoaspartate with dihydroxyacetone phosphate to form quinolinate. The sequence is that of Quinolinate synthase from Pyrococcus horikoshii (strain ATCC 700860 / DSM 12428 / JCM 9974 / NBRC 100139 / OT-3).